The following is a 100-amino-acid chain: Urease subunit gamma (100 aa).

Belongs to the urease gamma subunit family. As to quaternary structure, heterotrimer of UreA (gamma), UreB (beta) and UreC (alpha) subunits. Three heterotrimers associate to form the active enzyme.

It is found in the cytoplasm. The catalysed reaction is urea + 2 H2O + H(+) = hydrogencarbonate + 2 NH4(+). It participates in nitrogen metabolism; urea degradation; CO(2) and NH(3) from urea (urease route): step 1/1. This Staphylococcus aureus (strain N315) protein is Urease subunit gamma.